Here is a 273-residue protein sequence, read N- to C-terminus: F-actin-capping protein subunit alpha (273 aa).

The protein belongs to the F-actin-capping protein alpha subunit family. Heterodimer of an alpha and a beta subunit.

The protein resides in the cytoplasm. It is found in the cytoskeleton. Functionally, F-actin-capping proteins bind in a Ca(2+)-independent manner to the fast growing ends of actin filaments (barbed end) thereby blocking the exchange of subunits at these ends. Unlike other capping proteins (such as gelsolin and severin), these proteins do not sever actin filaments. This is F-actin-capping protein subunit alpha (cap1) from Emericella nidulans (strain FGSC A4 / ATCC 38163 / CBS 112.46 / NRRL 194 / M139) (Aspergillus nidulans).